Reading from the N-terminus, the 199-residue chain is Probable molybdenum cofactor guanylyltransferase (199 aa).

Residues 6–8, lysine 18, aspartate 65, and aspartate 97 each bind GTP; that span reads LAG. Residue aspartate 97 coordinates Mg(2+).

This sequence belongs to the MobA family. It depends on Mg(2+) as a cofactor.

Its subcellular location is the cytoplasm. The enzyme catalyses Mo-molybdopterin + GTP + H(+) = Mo-molybdopterin guanine dinucleotide + diphosphate. Transfers a GMP moiety from GTP to Mo-molybdopterin (Mo-MPT) cofactor (Moco or molybdenum cofactor) to form Mo-molybdopterin guanine dinucleotide (Mo-MGD) cofactor. The protein is Probable molybdenum cofactor guanylyltransferase of Staphylococcus aureus (strain Mu50 / ATCC 700699).